The sequence spans 800 residues: Nuclear cap-binding protein subunit 1 (800 aa).

Residues 1–26 are disordered; that stretch reads MSRRRAHDTEDEGYDHRRNKRRRVSE. Threonine 9 is modified (phosphothreonine). The region spanning 31–243 is the MIF4G domain; that stretch reads EDRLESLILR…CLWAQIRKLR (213 aa). Residues 669–700 are disordered; that stretch reads LAKADSSSSDSEDDSSHKRKKPITHADKPSEE.

It belongs to the NCBP1 family. As to quaternary structure, component of the nuclear cap-binding complex (CBC), a heterodimer composed of Cbp80 and Cbp20 that interacts with m7GpppG-capped RNA.

It is found in the nucleus. Functionally, component of the cap-binding complex (CBC), which binds cotranscriptionally to the 5'-cap of pre-mRNAs and is involved in various processes such as pre-mRNA splicing and RNA-mediated gene silencing (RNAi). The CBC complex is involved in miRNA-mediated RNA interference via its interaction with Ars2 and is required for primary microRNAs (miRNAs) processing. Also involved in innate immunity via the short interfering RNAs (siRNAs) processing machinery by restricting the viral RNA production. In the CBC complex, Cbp80 does not bind directly capped RNAs (m7GpppG-capped RNA) but is required to stabilize the movement of the N-terminal loop of Cbp20 and lock the CBC into a high affinity cap-binding state with the cap structure. The chain is Nuclear cap-binding protein subunit 1 (Cbp80) from Drosophila melanogaster (Fruit fly).